A 501-amino-acid chain; its full sequence is V-type proton ATPase subunit B 2 (501 aa).

Position 392 (Arg392) interacts with ATP.

The protein belongs to the ATPase alpha/beta chains family. As to quaternary structure, V-ATPase is a heteromultimeric enzyme made up of two complexes: the ATP-hydrolytic V1 complex and the proton translocation V0 complex. The V1 complex consists of three catalytic AB heterodimers that form a heterohexamer, three peripheral stalks each consisting of EG heterodimers, one central rotor including subunits D and F, and the regulatory subunits C and H. The proton translocation complex V0 consists of the proton transport subunit a, a ring of proteolipid subunits c9c'', rotary subunit d, subunits e and f, and the accessory subunits vah-19/Ac45 and vah-20/PRR. As to expression, predominantly expressed in male and hermaphrodite testis (at protein level).

It localises to the cytoplasm. Functionally, non-catalytic subunit of the V1 complex of vacuolar(H+)-ATPase (V-ATPase), a multisubunit enzyme composed of a peripheral complex (V1) that hydrolyzes ATP and a membrane integral complex (V0) that translocates protons. V-ATPase is responsible for acidifying and maintaining the pH of intracellular compartments and in some cell types, is targeted to the plasma membrane, where it is responsible for acidifying the extracellular environment. In neurons, required for necrotic cell death probably by promoting intracellular acidification. Required for spermatogenesis where it regulates the fibrous body-membranous organelle (FBMO) morphology in spermatocytes and the acidification of FBMO-derived secretory membranous organelles (MOs) as spermatids mature. The polypeptide is V-type proton ATPase subunit B 2 (Caenorhabditis elegans).